Here is an 81-residue protein sequence, read N- to C-terminus: GTVFFDQDSPDSPVKVTGEVTGLQKHGFHIHEFGDNTNMSADGSSYLQVSGSKLTQEGQASMEVKGNAGARVAXGVVGIAK.

As to quaternary structure, heterodimer of burs and pburs. As to expression, central nervous system. Coexpressed with CCAP in most CCAP-specific neurons. Coexpressed with pburs in the large bilateral lateral neurosecretory neurons of the first three unfused abdominal ganglia and in all anterior bilateral cell pairs in the thoracic ganglia.

It is found in the secreted. Functionally, final heterodimeric neurohormone released at the end of the molting cycle, involved in the sclerotization (tanning) of the insect cuticle, melanization and wing spreading. The sequence is that of Bursicon (burs) from Periplaneta americana (American cockroach).